The following is a 121-amino-acid chain: MAFKHQLILSTAILLAVLAAASASFREQCVPGREITYESLNARREYAVRQTCGYYLSAERQKRRCCDELSKVPELCWCEVLRILMDRRVTKEGVVKDSLLQDMSRCKKLTREFIAGIVGRE.

The signal sequence occupies residues 1–24 (MAFKHQLILSTAILLAVLAAASAS).

Belongs to the protease inhibitor I6 (cereal trypsin/alpha-amylase inhibitor) family.

Its subcellular location is the secreted. The sequence is that of Trypsin/alpha-amylase inhibitor CMX2 from Triticum aestivum (Wheat).